A 148-amino-acid chain; its full sequence is Arginine repressor (148 aa).

The protein belongs to the ArgR family.

The protein localises to the cytoplasm. It participates in amino-acid biosynthesis; L-arginine biosynthesis [regulation]. In terms of biological role, regulates arginine biosynthesis genes. This chain is Arginine repressor, found in Chlorobium phaeobacteroides (strain BS1).